Consider the following 239-residue polypeptide: 1-(5-phosphoribosyl)-5-[(5-phosphoribosylamino)methylideneamino] imidazole-4-carboxamide isomerase (239 aa).

The active-site Proton acceptor is the Asp9. The Proton donor role is filled by Asp131.

Belongs to the HisA/HisF family.

It localises to the cytoplasm. It carries out the reaction 1-(5-phospho-beta-D-ribosyl)-5-[(5-phospho-beta-D-ribosylamino)methylideneamino]imidazole-4-carboxamide = 5-[(5-phospho-1-deoxy-D-ribulos-1-ylimino)methylamino]-1-(5-phospho-beta-D-ribosyl)imidazole-4-carboxamide. Its pathway is amino-acid biosynthesis; L-histidine biosynthesis; L-histidine from 5-phospho-alpha-D-ribose 1-diphosphate: step 4/9. The chain is 1-(5-phosphoribosyl)-5-[(5-phosphoribosylamino)methylideneamino] imidazole-4-carboxamide isomerase from Parabacteroides distasonis (strain ATCC 8503 / DSM 20701 / CIP 104284 / JCM 5825 / NCTC 11152).